Consider the following 236-residue polypeptide: Uridylate kinase (236 aa).

ATP is bound at residue 10–13 (KLSG). Glycine 52 is a binding site for UMP. ATP is bound by residues glycine 53 and arginine 57. UMP contacts are provided by residues aspartate 72 and 133 to 140 (TGNPFFTT). Residues threonine 160, tyrosine 166, and aspartate 169 each contribute to the ATP site.

The protein belongs to the UMP kinase family. In terms of assembly, homohexamer.

The protein resides in the cytoplasm. The enzyme catalyses UMP + ATP = UDP + ADP. The protein operates within pyrimidine metabolism; CTP biosynthesis via de novo pathway; UDP from UMP (UMPK route): step 1/1. Inhibited by UTP. In terms of biological role, catalyzes the reversible phosphorylation of UMP to UDP. The sequence is that of Uridylate kinase from Bacteroides fragilis (strain ATCC 25285 / DSM 2151 / CCUG 4856 / JCM 11019 / LMG 10263 / NCTC 9343 / Onslow / VPI 2553 / EN-2).